We begin with the raw amino-acid sequence, 246 residues long: MTVDIKTTLVTIPNQNLQIAGYLAEPVAVGQYPVVIVIQEIFGVNSHIRDVTERVAKEGYVAIAPAIYQRQAPGFEEGYTPEGIEAGRKLKDQTSSAEILSDLEATIAYAQTLPNVKPEEVGLIGFCFGGWIVYLGASLPTVKATASFYGAGIPHWAPGTAEPPITYTDKIQGTLYAFFGLEDTSIPMADTEQIEQALTKYQVNHKIFRYPGADHGFFCDQRASYNAEAAADAWQKVKQLFQTELK.

Catalysis depends on residues Cys-127, Asp-183, and His-215.

The protein belongs to the dienelactone hydrolase family.

The catalysed reaction is 2-(5-oxo-2,5-dihydrofuran-2-ylidene)acetate + H2O = 4-oxohex-2-enedioate + H(+). The sequence is that of Putative carboxymethylenebutenolidase from Synechocystis sp. (strain ATCC 27184 / PCC 6803 / Kazusa).